Reading from the N-terminus, the 342-residue chain is Holliday junction branch migration complex subunit RuvB (342 aa).

The interval 1-184 (MEEDFNIRDH…FGINLHLEYY (184 aa)) is large ATPase domain (RuvB-L). ATP is bound by residues L23, R24, G65, K68, T69, T70, 131-133 (EDY), R174, Y184, and R221. T69 provides a ligand contact to Mg(2+). The small ATPAse domain (RuvB-S) stretch occupies residues 185–255 (DDDILSNIIS…IANYALEALN (71 aa)). Positions 258 to 342 (KYGLDEIDNK…YNSQKTLFND (85 aa)) are head domain (RuvB-H). 2 residues coordinate DNA: R313 and R318.

Belongs to the RuvB family. As to quaternary structure, homohexamer. Forms an RuvA(8)-RuvB(12)-Holliday junction (HJ) complex. HJ DNA is sandwiched between 2 RuvA tetramers; dsDNA enters through RuvA and exits via RuvB. An RuvB hexamer assembles on each DNA strand where it exits the tetramer. Each RuvB hexamer is contacted by two RuvA subunits (via domain III) on 2 adjacent RuvB subunits; this complex drives branch migration. In the full resolvosome a probable DNA-RuvA(4)-RuvB(12)-RuvC(2) complex forms which resolves the HJ.

The protein resides in the cytoplasm. It carries out the reaction ATP + H2O = ADP + phosphate + H(+). Its function is as follows. The RuvA-RuvB-RuvC complex processes Holliday junction (HJ) DNA during genetic recombination and DNA repair, while the RuvA-RuvB complex plays an important role in the rescue of blocked DNA replication forks via replication fork reversal (RFR). RuvA specifically binds to HJ cruciform DNA, conferring on it an open structure. The RuvB hexamer acts as an ATP-dependent pump, pulling dsDNA into and through the RuvAB complex. RuvB forms 2 homohexamers on either side of HJ DNA bound by 1 or 2 RuvA tetramers; 4 subunits per hexamer contact DNA at a time. Coordinated motions by a converter formed by DNA-disengaged RuvB subunits stimulates ATP hydrolysis and nucleotide exchange. Immobilization of the converter enables RuvB to convert the ATP-contained energy into a lever motion, pulling 2 nucleotides of DNA out of the RuvA tetramer per ATP hydrolyzed, thus driving DNA branch migration. The RuvB motors rotate together with the DNA substrate, which together with the progressing nucleotide cycle form the mechanistic basis for DNA recombination by continuous HJ branch migration. Branch migration allows RuvC to scan DNA until it finds its consensus sequence, where it cleaves and resolves cruciform DNA. The sequence is that of Holliday junction branch migration complex subunit RuvB from Bacteroides fragilis (strain ATCC 25285 / DSM 2151 / CCUG 4856 / JCM 11019 / LMG 10263 / NCTC 9343 / Onslow / VPI 2553 / EN-2).